A 225-amino-acid chain; its full sequence is LSTTCEGKDKGICNLNLALQLITDVRDNFPVCPSPPLPIDCEEVLQRDFKAIPNPIDVYCDMVTDGGGWTVIQRRGDFHGPIDYFYKDWQSYKKGFGDIEKEFWLGNENIFGLSNQRYALYDTFANDDEDHKYMLHISGYKGDAGDSMIGVHNEQKFSTKDKNDNFPGATSCAQLYKGGWWYNQCHVSNLNGQYLKSYADGVIWRSWKGYHESLGWTEIKIKDVK.

The Fibrinogen C-terminal domain occupies Cys32–Lys225. A disulfide bridge connects residues Cys41 and Cys60. Residues Arg75–Asp77 carry the Cell attachment site motif. Positions 164 and 170 each coordinate Ca(2+). An intrachain disulfide couples Cys172 to Cys185.

In terms of tissue distribution, expressed by the venom gland.

The protein localises to the secreted. Functionally, lectin involved in innate immunity. This Phoneutria nigriventer (Brazilian armed spider) protein is Techylectin-like protein.